The chain runs to 122 residues: Small ribosomal subunit protein uS13 (122 aa).

The interval 94–122 (KQLPVRGQRTHTNARTRKGKAKPIAGKKK) is disordered.

This sequence belongs to the universal ribosomal protein uS13 family. Part of the 30S ribosomal subunit. Forms a loose heterodimer with protein S19. Forms two bridges to the 50S subunit in the 70S ribosome.

Located at the top of the head of the 30S subunit, it contacts several helices of the 16S rRNA. In the 70S ribosome it contacts the 23S rRNA (bridge B1a) and protein L5 of the 50S subunit (bridge B1b), connecting the 2 subunits; these bridges are implicated in subunit movement. Contacts the tRNAs in the A and P-sites. This Methylorubrum extorquens (strain PA1) (Methylobacterium extorquens) protein is Small ribosomal subunit protein uS13.